Here is a 60-residue protein sequence, read N- to C-terminus: Large ribosomal subunit protein bL32 (60 aa).

A compositionally biased stretch (basic residues) spans 1–16 (MPNPKRRHSKKRTSTR). Positions 1–28 (MPNPKRRHSKKRTSTRRAHDALKQPGLS) are disordered.

It belongs to the bacterial ribosomal protein bL32 family.

In Solibacter usitatus (strain Ellin6076), this protein is Large ribosomal subunit protein bL32.